We begin with the raw amino-acid sequence, 147 residues long: uncharacterized protein (147 aa).

Residues 44 to 147 (LVGYIDKEIH…LKSIKERLSI (104 aa)) enclose the HTH LytTR-type domain.

The protein resides in the cytoplasm. This is an uncharacterized protein from Staphylococcus aureus (strain MRSA252).